The following is a 57-amino-acid chain: Small ribosomal subunit protein bS21 (57 aa).

Residues 22 to 57 form a disordered region; it reads QCSKSGVLSEAKKRKHYEKPSEKRKRKATEKRNSRK. Residues 33–57 show a composition bias toward basic residues; the sequence is KKRKHYEKPSEKRKRKATEKRNSRK.

This sequence belongs to the bacterial ribosomal protein bS21 family.

The chain is Small ribosomal subunit protein bS21 from Natranaerobius thermophilus (strain ATCC BAA-1301 / DSM 18059 / JW/NM-WN-LF).